A 378-amino-acid polypeptide reads, in one-letter code: Chaperone protein DnaJ (378 aa).

The J domain maps to aspartate 5 to glycine 70. Residues glycine 134–threonine 212 form a CR-type zinc finger. Zn(2+) contacts are provided by cysteine 147, cysteine 150, cysteine 164, cysteine 167, cysteine 186, cysteine 189, cysteine 200, and cysteine 203. 4 CXXCXGXG motif repeats span residues cysteine 147–glycine 154, cysteine 164–glycine 171, cysteine 186–glycine 193, and cysteine 200–glycine 207.

The protein belongs to the DnaJ family. In terms of assembly, homodimer. Zn(2+) serves as cofactor.

The protein resides in the cytoplasm. Participates actively in the response to hyperosmotic and heat shock by preventing the aggregation of stress-denatured proteins and by disaggregating proteins, also in an autonomous, DnaK-independent fashion. Unfolded proteins bind initially to DnaJ; upon interaction with the DnaJ-bound protein, DnaK hydrolyzes its bound ATP, resulting in the formation of a stable complex. GrpE releases ADP from DnaK; ATP binding to DnaK triggers the release of the substrate protein, thus completing the reaction cycle. Several rounds of ATP-dependent interactions between DnaJ, DnaK and GrpE are required for fully efficient folding. Also involved, together with DnaK and GrpE, in the DNA replication of plasmids through activation of initiation proteins. This chain is Chaperone protein DnaJ, found in Colwellia psychrerythraea (strain 34H / ATCC BAA-681) (Vibrio psychroerythus).